The primary structure comprises 87 residues: uncharacterized protein (87 aa).

The segment at 43 to 87 (NQGYGQNFGDASGFMGTRSHVDDRDQIDSPASFESEAVNSSIKRK) is disordered.

This is an uncharacterized protein from Bacillus subtilis (strain 168).